The chain runs to 246 residues: Probable cytokinin riboside 5'-monophosphate phosphoribohydrolase LOGL5 (246 aa).

The span at 1-10 (MMMENSREQQ) shows a compositional bias: basic and acidic residues. Residues 1–28 (MMMENSREQQPESSPANNNSKKKKKKKT) form a disordered region. Substrate-binding positions include Glu-103, 121 to 122 (RK), 138 to 144 (GYGTLEE), and Thr-150.

This sequence belongs to the LOG family. Expressed in roots and leaves.

The catalysed reaction is N(6)-(dimethylallyl)adenosine 5'-phosphate + H2O = N(6)-dimethylallyladenine + D-ribose 5-phosphate. The enzyme catalyses 9-ribosyl-trans-zeatin 5'-phosphate + H2O = trans-zeatin + D-ribose 5-phosphate. In terms of biological role, cytokinin-activating enzyme working in the direct activation pathway. Phosphoribohydrolase that converts inactive cytokinin nucleotides to the biologically active free-base forms. The sequence is that of Probable cytokinin riboside 5'-monophosphate phosphoribohydrolase LOGL5 (LOGL5) from Oryza sativa subsp. japonica (Rice).